We begin with the raw amino-acid sequence, 88 residues long: ATP synthase epsilon chain (88 aa).

The protein belongs to the ATPase epsilon chain family. In terms of assembly, F-type ATPases have 2 components, CF(1) - the catalytic core - and CF(0) - the membrane proton channel. CF(1) has five subunits: alpha(3), beta(3), gamma(1), delta(1), epsilon(1). CF(0) has three main subunits: a, b and c.

It localises to the cell inner membrane. In terms of biological role, produces ATP from ADP in the presence of a proton gradient across the membrane. The sequence is that of ATP synthase epsilon chain (atpC) from Chlorobaculum tepidum (strain ATCC 49652 / DSM 12025 / NBRC 103806 / TLS) (Chlorobium tepidum).